The chain runs to 476 residues: Bifunctional protein HldE (476 aa).

A ribokinase region spans residues 1–319 (MKVSLPAFEK…RALSVNHGES (319 aa)). 195-198 (NMGE) is a binding site for ATP. Residue aspartate 264 is part of the active site. Residues 345–476 (MTNGCFDILH…SIIENIMANQ (132 aa)) form a cytidylyltransferase region.

This sequence in the N-terminal section; belongs to the carbohydrate kinase PfkB family. It in the C-terminal section; belongs to the cytidylyltransferase family. Homodimer.

The enzyme catalyses D-glycero-beta-D-manno-heptose 7-phosphate + ATP = D-glycero-beta-D-manno-heptose 1,7-bisphosphate + ADP + H(+). The catalysed reaction is D-glycero-beta-D-manno-heptose 1-phosphate + ATP + H(+) = ADP-D-glycero-beta-D-manno-heptose + diphosphate. It participates in nucleotide-sugar biosynthesis; ADP-L-glycero-beta-D-manno-heptose biosynthesis; ADP-L-glycero-beta-D-manno-heptose from D-glycero-beta-D-manno-heptose 7-phosphate: step 1/4. It functions in the pathway nucleotide-sugar biosynthesis; ADP-L-glycero-beta-D-manno-heptose biosynthesis; ADP-L-glycero-beta-D-manno-heptose from D-glycero-beta-D-manno-heptose 7-phosphate: step 3/4. Functionally, catalyzes the phosphorylation of D-glycero-D-manno-heptose 7-phosphate at the C-1 position to selectively form D-glycero-beta-D-manno-heptose-1,7-bisphosphate. Its function is as follows. Catalyzes the ADP transfer from ATP to D-glycero-beta-D-manno-heptose 1-phosphate, yielding ADP-D-glycero-beta-D-manno-heptose. This is Bifunctional protein HldE from Shewanella sediminis (strain HAW-EB3).